We begin with the raw amino-acid sequence, 192 residues long: Cytidylate kinase (192 aa).

Residue 7-15 (GPAGSGKST) coordinates ATP.

The protein belongs to the cytidylate kinase family. Type 2 subfamily.

It localises to the cytoplasm. It carries out the reaction CMP + ATP = CDP + ADP. The catalysed reaction is dCMP + ATP = dCDP + ADP. The chain is Cytidylate kinase from Haloarcula marismortui (strain ATCC 43049 / DSM 3752 / JCM 8966 / VKM B-1809) (Halobacterium marismortui).